The chain runs to 363 residues: MKCGFFHTPYNLPTRTARQMFDWSLKLAQVCDEAGFADFMIGEHSTLAWENIPCPEIIIGAAAPLTKNIRFAPMAHLLPYHNPATLAIQIGWLSQILEGRYFLGVAPGGHHTDAILHGFEGIGPLQEQMFESLELMEKIWAREPFMEKGKFFQAGFPGPDTMPEYDVEIADNSPWGGRESMEVAVTGLTKNSSSLKWAGERNYSPISFFGGHEVMRSHYDTWAAAMQSKGFTPERSRFRVTRDIFIADTDAEAKKRAKASGLGKSWEHYLFPIYKKFNLFPGIIADAGLDIDPSQVDMDFLAEHVWLCGSPETVKGKIERMMERSGGCGQIVVCSHDNIDNPEPYFESLQRLASEVLPKVRMG.

FMN-binding positions include methionine 74 and 186–194 (TGLTKNSSS).

This sequence belongs to the bacterial luciferase oxidoreductase family. As to quaternary structure, homodimer. Likely forms a loose transient complex with a P.putida flavin reductase that provides the required FMNH(2) to the enzyme.

The catalysed reaction is (1R,4R)-bornane-2,5-dione + FMNH2 + O2 = (1R,4R)-5-oxo-1,2-campholide + FMN + H2O + H(+). The protein operates within terpene metabolism; (R)-camphor degradation. Functionally, involved in the degradation and assimilation of (+)-camphor, which allows P.putida strain NCIMB 10007 to grow on this enantiomer of camphor as the sole carbon source. Catalyzes the FMNH(2)-dependent lactonization of 2,5-diketocamphane via a Baeyer-Villiger oxidation to produce the unstable lactone 5-oxo-1,2-campholide with (R,R) configuration, that presumably undergoes spontaneous hydrolysis to form 2-oxo-Delta(3)-4,5,5-trimethylcyclopentenylacetate. Is also able to convert (+)-camphor and norcamphor to the corresponding lactone in vitro. Shows no conversion of (-)-camphor, (+)-fenchone, (-)-fenchone, and (+)-nopinone. Acts only on bicyclic ketones; is not active towards monocyclic ketones, aromatic ketones, the aliphatic 2-decanone, 1-indanone and progesterone. In Pseudomonas putida (Arthrobacter siderocapsulatus), this protein is 2,5-diketocamphane 1,2-monooxygenase 1.